A 409-amino-acid chain; its full sequence is Putative competence-damage inducible protein (409 aa).

Belongs to the CinA family.

The sequence is that of Putative competence-damage inducible protein from Clostridium botulinum (strain ATCC 19397 / Type A).